The following is a 637-amino-acid chain: Acyl-CoA ligase cm3C (637 aa).

ATP-binding positions include 282–290, 423–428, aspartate 507, arginine 526, and lysine 624; these read TSGTSGRQK and HAWGLT. The tract at residues 353-423 is SBD1; sequence DMQRMLGSVA…SLQPSWEFLH (71 aa). The segment at 424–486 is SBD2; that stretch reads AWGLTETCIV…YKAPNMFVGY (63 aa).

Belongs to the ATP-dependent AMP-binding enzyme family.

Its pathway is secondary metabolite biosynthesis. Its function is as follows. Acyl-CoA ligase; part of the gene cluster that mediates the biosynthesis of beauveriolides I and III, cyclodepsipeptides acting as inhibitors of the acyl-CoA:cholesterol acyltransferase. The HR-PKS cm3B initiates the biosynthesis of beauveriolides by iteratively catalyzing the formation of the linear polyketide chain. The ATP-dependent acetyl-CoA ligase cm3D converts the polyketide carboxylic acid to a CoA thioester which id shuttled to the first T domain in the NRPS cm3A by the acetyltransferase cm3C. Cm3A contains 13 domains and assembles the polyketide chain, L-phenylalanine, L-alanine, and D-leucine (or D-allo-isoleucine) to form beauveriolide I (or beauveriolide III). The production of both beauveriolides I and III suggests the substrate adaptability of cm3B, using different amino acids as substrates. This is Acyl-CoA ligase cm3C from Cordyceps militaris (strain CM01) (Caterpillar fungus).